Here is a 157-residue protein sequence, read N- to C-terminus: Lipoprotein signal peptidase (157 aa).

3 helical membrane-spanning segments follow: residues 10-30 (LVFMGVFFLIFGVDQAIKYAI), 58-78 (FLEGGLKYLQILLILGLFIFL), and 84-104 (LFKNHAIEFGMVFGAGVSNVL). Residues Asp114 and Asp131 contribute to the active site. A helical membrane pass occupies residues 122 to 142 (FDFAIFNFADVMIDVGVGVLL).

The protein belongs to the peptidase A8 family.

Its subcellular location is the cell inner membrane. It catalyses the reaction Release of signal peptides from bacterial membrane prolipoproteins. Hydrolyzes -Xaa-Yaa-Zaa-|-(S,diacylglyceryl)Cys-, in which Xaa is hydrophobic (preferably Leu), and Yaa (Ala or Ser) and Zaa (Gly or Ala) have small, neutral side chains.. Its pathway is protein modification; lipoprotein biosynthesis (signal peptide cleavage). Its function is as follows. This protein specifically catalyzes the removal of signal peptides from prolipoproteins. This Helicobacter pylori (strain ATCC 700392 / 26695) (Campylobacter pylori) protein is Lipoprotein signal peptidase.